Consider the following 316-residue polypeptide: Apolipoprotein E (316 aa).

Positions M1–A18 are cleaved as a signal peptide. 8 repeat units span residues V79–A100, P101–G122, S123–G144, Q145–L166, R167–E188, R189–A210, T211–H232, and G233–E254. The tract at residues V79–E254 is 8 X 22 AA approximate tandem repeats. Position 142 is a methionine sulfoxide (M142). S146 carries the phosphoserine modification. Residues H157 to R167 form an LDL and other lipoprotein receptors binding region. L161–R164 contributes to the heparin binding site. A lipid-binding and lipoprotein association region spans residues A209 to M289. An O-linked (GalNAc...) threonine glycan is attached at T211. Position 228–235 (R228–L235) interacts with heparin. A homooligomerization region spans residues S265–H316. Positions R277 to M289 are specificity for association with VLDL.

The protein belongs to the apolipoprotein A1/A4/E family. As to quaternary structure, homotetramer. May interact with ABCA1; functionally associated with ABCA1 in the biogenesis of HDLs. May interact with APP/A4 amyloid-beta peptide; the interaction is extremely stable in vitro but its physiological significance is unclear. May interact with MAPT. May interact with MAP2. In the cerebrospinal fluid, interacts with secreted SORL1. Interacts with PMEL; this allows the loading of PMEL luminal fragment on ILVs to induce fibril nucleation. APOE exists as multiple glycosylated and sialylated glycoforms within cells and in plasma. The extent of glycosylation and sialylation are tissue and context specific. In terms of processing, glycated in plasma VLDL. Post-translationally, phosphorylated by FAM20C in the extracellular medium.

Its subcellular location is the secreted. The protein localises to the extracellular space. It localises to the extracellular matrix. It is found in the extracellular vesicle. The protein resides in the endosome. Its subcellular location is the multivesicular body. Its function is as follows. APOE is an apolipoprotein, a protein associating with lipid particles, that mainly functions in lipoprotein-mediated lipid transport between organs via the plasma and interstitial fluids. APOE is a core component of plasma lipoproteins and is involved in their production, conversion and clearance. Apolipoproteins are amphipathic molecules that interact both with lipids of the lipoprotein particle core and the aqueous environment of the plasma. As such, APOE associates with chylomicrons, chylomicron remnants, very low density lipoproteins (VLDL) and intermediate density lipoproteins (IDL) but shows a preferential binding to high-density lipoproteins (HDL). It also binds a wide range of cellular receptors including the LDL receptor/LDLR and the very low-density lipoprotein receptor/VLDLR that mediate the cellular uptake of the APOE-containing lipoprotein particles. Finally, APOE also has a heparin-binding activity and binds heparan-sulfate proteoglycans on the surface of cells, a property that supports the capture and the receptor-mediated uptake of APOE-containing lipoproteins by cells. The sequence is that of Apolipoprotein E (APOE) from Capra hircus aegagrus (Wild goat).